The following is an 815-amino-acid chain: MVVVDWLGLGLGSVAGALVSEGLKVLISEAKKVLAFKSVSNELASTMESLLPVIKEIESMQDGMELQDLKDTIDKALLLVEKCSHVEKWNIILKSKYTRKVEEINRKMLKFCQVQLQLLLFRNQLKSMPSMEAILNNYFQNINKKLDRLSGSPAPPLVSKRCSVPKLDNMVLVGLDWPLVELKKKLLDNSVVVVSGPPGCGKTTLVTKLCDDPEIEGEFKKIFYSVVSNTPNFRAIVQNLLQDNGCGAITFDDDSQAETGLRDLLEELTKDGRILLVLDDVWQGSEFLLRKFQIDLPDYKILVTSQFDFTSLWPTYHLVPLKYEYARSLLIQWASPPLHTSPDEYEDLLQKILKRCNGFPLVIEVVGISLKGQALYLWKGQVESWSEGETILGNANPTVRQRLQPSFNVLKPHLKECFMDMGSFLQDQKIRASLIIDIWMELYGRGSSSTNKFMLYLNELASQNLLKLVHLGTNKREDGFYNELLVTQHNILRELAIFQSELEPIMQRKKLNLEIREDNFPDECLNQPINARLLSIYTDDLFSSKWLEMDCPNVEALVLNISSLDYALPSFIAEMKKLKVLTIANHGFYPARLSNFSCLSSLPNLKRIRFEKVSVTLLDIPQLQLGSLKKLSFFMCSFGEVFYDTEDIDVSKALSNLQEIDIDYCYDLDELPYWIPEVVSLKTLSITNCNKLSQLPEAIGNLSRLEVLRMCSCMNLSELPEATERLSNLRSLDISHCLGLRKLPQEIGKLQKLENISMRKCSGCELPDSVRYLENLEVKCDEVTGLLWERLMPEMRNLRVHTEETEHNLKLLLTF.

An RPW8 domain is found at Met-1 to Ser-150. NB-ARC domains follow at residues Pro-156–Gln-283 and Ser-341–Met-440. Gly-196–Thr-203 contributes to the ATP binding site. 4 LRR repeats span residues Asn-656–Val-678, Ser-680–Leu-702, Arg-704–Leu-726, and Asn-728–Leu-750.

Belongs to the disease resistance NB-LRR family.

In terms of biological role, probable disease resistance protein. In Arabidopsis thaliana (Mouse-ear cress), this protein is Probable disease resistance protein At5g66910.